The following is a 172-amino-acid chain: Peptide deformylase (172 aa).

Residues Cys-92 and His-134 each contribute to the Fe cation site. The active site involves Glu-135. His-138 is a binding site for Fe cation.

This sequence belongs to the polypeptide deformylase family. The cofactor is Fe(2+).

It carries out the reaction N-terminal N-formyl-L-methionyl-[peptide] + H2O = N-terminal L-methionyl-[peptide] + formate. Functionally, removes the formyl group from the N-terminal Met of newly synthesized proteins. Requires at least a dipeptide for an efficient rate of reaction. N-terminal L-methionine is a prerequisite for activity but the enzyme has broad specificity at other positions. The protein is Peptide deformylase of Saccharophagus degradans (strain 2-40 / ATCC 43961 / DSM 17024).